A 283-amino-acid polypeptide reads, in one-letter code: Vitamin K epoxide reductase homolog (283 aa).

Residues Met1–Arg20 lie on the Cytoplasmic side of the membrane. The chain crosses the membrane as a helical span at residues Leu21–Lys41. The Periplasmic portion of the chain corresponds to Leu42–Glu66. Cysteines 50 and 56 form a disulfide. Residue Val59 to Ala65 participates in a quinone binding. The helical transmembrane segment at Phe67 to Ala87 threads the bilayer. The Cytoplasmic segment spans residues Val88–Pro102. A helical transmembrane segment spans residues Ala103–Val123. A quinone is bound at residue Met111 to Met122. Topologically, residues Ala124–Gln128 are periplasmic. Residues Phe129 to Leu149 traverse the membrane as a helical segment. Cys130 and Cys133 form a disulfide bridge. Topologically, residues Gly150 to Lys158 are cytoplasmic. A helical membrane pass occupies residues Leu159–Ala179. Topologically, residues Asn180–Arg283 are periplasmic. A thioredoxin-like domain region spans residues Ser186–Arg283. Intrachain disulfides connect Cys209/Cys212 and Cys231/Cys244.

The protein belongs to the VKOR family.

It localises to the membrane. With respect to regulation, inhibited by ferulenol. Its function is as follows. Thiol-disulfide oxidoreductase that catalyzes vitamin K-dependent disulfide bond formation in periplasmic target proteins. The chain is Vitamin K epoxide reductase homolog from Synechococcus sp. (strain JA-2-3B'a(2-13)) (Cyanobacteria bacterium Yellowstone B-Prime).